We begin with the raw amino-acid sequence, 380 residues long: Crotonobetainyl-CoA reductase (380 aa).

This sequence belongs to the acyl-CoA dehydrogenase family. As to quaternary structure, homotetramer. It depends on FAD as a cofactor.

It is found in the cytoplasm. The catalysed reaction is 4-(trimethylamino)butanoyl-CoA + oxidized [electron-transfer flavoprotein] + H(+) = crotonobetainyl-CoA + reduced [electron-transfer flavoprotein]. The protein operates within amine and polyamine metabolism; carnitine metabolism. Its function is as follows. Catalyzes the reduction of crotonobetainyl-CoA to gamma-butyrobetainyl-CoA. This Salmonella agona (strain SL483) protein is Crotonobetainyl-CoA reductase.